A 445-amino-acid chain; its full sequence is Anthranilate N-benzoyltransferase protein 1 (445 aa).

Active-site proton acceptor residues include His164 and Asp392.

It belongs to the plant acyltransferase family. N-terminus is blocked.

It catalyses the reaction anthranilate + benzoyl-CoA = N-benzoylanthranilate + CoA. It participates in phytoalexin biosynthesis; methoxydianthramide B biosynthesis. Functionally, catalyzes the formation of N-benzoylanthranilate, in the course of methoxydianthramide B, a phytoalexin. Phytoalexins are produced in response to infection by parasites, and are essential for the expression of disease resistance. This is Anthranilate N-benzoyltransferase protein 1 (HCBT1) from Dianthus caryophyllus (Carnation).